A 948-amino-acid polypeptide reads, in one-letter code: RNA polymerase-associated protein RapA (948 aa).

Residues 164–332 (EVADRSAPRV…FARLRLLDPN (169 aa)) form the Helicase ATP-binding domain. 177 to 184 (DEVGLGKT) contacts ATP. Positions 278 to 281 (DEAH) match the DEAH box motif. In terms of domain architecture, Helicase C-terminal spans 473-627 (RVDWLIDTLK…TCPTGNALQH (155 aa)).

This sequence belongs to the SNF2/RAD54 helicase family. RapA subfamily. In terms of assembly, interacts with the RNAP. Has a higher affinity for the core RNAP than for the holoenzyme. Its ATPase activity is stimulated by binding to RNAP.

Its function is as follows. Transcription regulator that activates transcription by stimulating RNA polymerase (RNAP) recycling in case of stress conditions such as supercoiled DNA or high salt concentrations. Probably acts by releasing the RNAP, when it is trapped or immobilized on tightly supercoiled DNA. Does not activate transcription on linear DNA. Probably not involved in DNA repair. The polypeptide is RNA polymerase-associated protein RapA (Pseudomonas putida (strain ATCC 47054 / DSM 6125 / CFBP 8728 / NCIMB 11950 / KT2440)).